A 216-amino-acid polypeptide reads, in one-letter code: Peroxiredoxin (216 aa).

Residues 2-158 enclose the Thioredoxin domain; that stretch reads IVIGEKFPEV…ILRLVKALKI (157 aa). Catalysis depends on C46, which acts as the Cysteine sulfenic acid (-SOH) intermediate. R121 provides a ligand contact to substrate. C205 and C211 form a disulfide bridge.

This sequence belongs to the peroxiredoxin family. Prx6 subfamily. As to quaternary structure, homodecamer. Pentamer of dimers that assemble into a ring structure.

Its subcellular location is the cytoplasm. It carries out the reaction a hydroperoxide + [thioredoxin]-dithiol = an alcohol + [thioredoxin]-disulfide + H2O. Its function is as follows. Thiol-specific peroxidase that catalyzes the reduction of hydrogen peroxide and organic hydroperoxides to water and alcohols, respectively. Plays a role in cell protection against oxidative stress by detoxifying peroxides. The chain is Peroxiredoxin from Pyrococcus furiosus (strain ATCC 43587 / DSM 3638 / JCM 8422 / Vc1).